The primary structure comprises 183 residues: Protein P7 (183 aa).

It localises to the host nucleus. Its function is as follows. May play a role in inhibition of the host immune system by counteracting the type I interferon response. In Gadus morhua (Atlantic cod), this protein is Protein P7.